Consider the following 65-residue polypeptide: Large ribosomal subunit protein bL32 (65 aa).

Over residues 1 to 19 (MAVQKSRKTPSKRGMRRSH) the composition is skewed to basic residues. A disordered region spans residues 1–32 (MAVQKSRKTPSKRGMRRSHNALTNPTLSEDQE).

It belongs to the bacterial ribosomal protein bL32 family.

This is Large ribosomal subunit protein bL32 from Ruthia magnifica subsp. Calyptogena magnifica.